Reading from the N-terminus, the 319-residue chain is Probable secreted beta-glucosidase C2G2.17c (319 aa).

A signal peptide spans Met-1 to Ala-19. N-linked (GlcNAc...) asparagine glycosylation is found at Asn-36, Asn-39, Asn-45, Asn-48, and Asn-221.

Belongs to the SUN family.

It localises to the secreted. In terms of biological role, cell surface beta-glucosidase involved in cell wall biogenesis. The protein is Probable secreted beta-glucosidase C2G2.17c of Schizosaccharomyces pombe (strain 972 / ATCC 24843) (Fission yeast).